The sequence spans 233 residues: Ribose-5-phosphate isomerase A (233 aa).

Residues 28-31 (SGST), 83-86 (DGAD), and 96-99 (KGGG) contribute to the substrate site. The active-site Proton acceptor is glutamate 105. Substrate is bound at residue lysine 123.

This sequence belongs to the ribose 5-phosphate isomerase family. In terms of assembly, homodimer.

It catalyses the reaction aldehydo-D-ribose 5-phosphate = D-ribulose 5-phosphate. It functions in the pathway carbohydrate degradation; pentose phosphate pathway; D-ribose 5-phosphate from D-ribulose 5-phosphate (non-oxidative stage): step 1/1. Catalyzes the reversible conversion of ribose-5-phosphate to ribulose 5-phosphate. This Bartonella bacilliformis (strain ATCC 35685 / KC583 / Herrer 020/F12,63) protein is Ribose-5-phosphate isomerase A.